A 128-amino-acid polypeptide reads, in one-letter code: Ribonuclease P protein component (128 aa).

The protein belongs to the RnpA family. Consists of a catalytic RNA component (M1 or rnpB) and a protein subunit.

It catalyses the reaction Endonucleolytic cleavage of RNA, removing 5'-extranucleotides from tRNA precursor.. In terms of biological role, RNaseP catalyzes the removal of the 5'-leader sequence from pre-tRNA to produce the mature 5'-terminus. It can also cleave other RNA substrates such as 4.5S RNA. The protein component plays an auxiliary but essential role in vivo by binding to the 5'-leader sequence and broadening the substrate specificity of the ribozyme. The chain is Ribonuclease P protein component from Prochlorococcus marinus (strain NATL2A).